Here is a 67-residue protein sequence, read N- to C-terminus: Probable Sec-independent protein translocase protein TatE (67 aa).

The chain crosses the membrane as a helical span at residues 1–21 (MEGISLAKLLIVGALIVLLFG). Residues 43 to 67 (MNDDSDATSKTASEDKNAGQAVHKE) are disordered. Residues 54–67 (ASEDKNAGQAVHKE) are compositionally biased toward basic and acidic residues.

Belongs to the TatA/E family. TatE subfamily.

The protein resides in the cell inner membrane. In terms of biological role, part of the twin-arginine translocation (Tat) system that transports large folded proteins containing a characteristic twin-arginine motif in their signal peptide across membranes. TatE shares overlapping functions with TatA. The protein is Probable Sec-independent protein translocase protein TatE of Erwinia tasmaniensis (strain DSM 17950 / CFBP 7177 / CIP 109463 / NCPPB 4357 / Et1/99).